The sequence spans 154 residues: uncharacterized protein (154 aa).

2 coiled-coil regions span residues 8–48 and 89–138; these read DEEV…AIEA and VQEL…RGLV.

This is an uncharacterized protein from Treponema pallidum (strain Nichols).